We begin with the raw amino-acid sequence, 432 residues long: Transcriptional adapter 3 (432 aa).

A Glycyl lysine isopeptide (Lys-Gly) (interchain with G-Cter in SUMO2) cross-link involves residue lysine 21. A coiled-coil region spans residues 40–69; the sequence is IEELDTLQLELETLLSSASRRLRVLEAETQ. Residues 87–127 form a disordered region; sequence ARDHELGAPPKHGKPKKQKLEGKTGHGPGPGPGRPKSKNVQ. Lysine 129 is covalently cross-linked (Glycyl lysine isopeptide (Lys-Gly) (interchain with G-Cter in SUMO2)). The disordered stretch occupies residues 272 to 319; sequence NIISPMEDSPIPDMSGKESGADGASTSPRNQNKPFSVPHTKSLESRIK. 2 positions are modified to phosphoserine: serine 280 and serine 298. Positions 295-305 are enriched in polar residues; it reads ASTSPRNQNKP. Positions 367–407 form a coiled coil; it reads LLRLAKEEVSRQELRQRVRMADNEVMDAFRKIMAARQKKRT. N6-acetyllysine is present on lysine 418.

The protein belongs to the NGG1 family. The PCAF complex is composed of a number of TBP-associated factors (TAFS), such as TAF5, TAF5L, TAF6, TAF6L, TAF9, TAF10 and TAF12, PCAF, and also PCAF-associated factors (PAFs), such as TADA2L/ADA2, TADA3L/ADA3 and SPT3. Interacts directly with TADA2L and PCAF and also with the high-risk HPV oncoprotein E6. Component of the STAGA transcription coactivator-HAT complex, at least composed of SUPT3H, GCN5L2, TAF5L, TAF6L, SUPT7L, TADA3L, TAD1L, TAF10, TAF12, TRRAP and TAF9. Component of the TFTC-HAT complex. Component of the ADA2A-containing complex (ATAC), composed of KAT14, KAT2A, TADA2L, TADA3L, ZZ3, MBIP, WDR5, YEATS2, CCDC101 and DR1.

It localises to the nucleus. Functions as a component of the PCAF complex. The PCAF complex is capable of efficiently acetylating histones in a nucleosomal context. The PCAF complex could be considered as the human version of the yeast SAGA complex. Also known as a coactivator for p53/TP53-dependent transcriptional activation. Component of the ATAC complex, a complex with histone acetyltransferase activity on histones H3 and H4. The sequence is that of Transcriptional adapter 3 (Tada3) from Rattus norvegicus (Rat).